Reading from the N-terminus, the 1411-residue chain is DNA-directed RNA polymerase subunit beta' (1411 aa).

4 residues coordinate Zn(2+): cysteine 70, cysteine 72, cysteine 85, and cysteine 88. The Mg(2+) site is built by aspartate 460, aspartate 462, and aspartate 464. Positions 814, 888, 895, and 898 each coordinate Zn(2+).

This sequence belongs to the RNA polymerase beta' chain family. In terms of assembly, the RNAP catalytic core consists of 2 alpha, 1 beta, 1 beta' and 1 omega subunit. When a sigma factor is associated with the core the holoenzyme is formed, which can initiate transcription. Mg(2+) is required as a cofactor. It depends on Zn(2+) as a cofactor.

It catalyses the reaction RNA(n) + a ribonucleoside 5'-triphosphate = RNA(n+1) + diphosphate. In terms of biological role, DNA-dependent RNA polymerase catalyzes the transcription of DNA into RNA using the four ribonucleoside triphosphates as substrates. This Idiomarina loihiensis (strain ATCC BAA-735 / DSM 15497 / L2-TR) protein is DNA-directed RNA polymerase subunit beta'.